Here is a 450-residue protein sequence, read N- to C-terminus: 3-phosphoshikimate 1-carboxyvinyltransferase (450 aa).

The segment at 1 to 25 (MSAHGDPKPMTARKGGALTGTAEVP) is disordered. 3-phosphoshikimate is bound by residues lysine 28, serine 29, and arginine 33. Phosphoenolpyruvate is bound at residue lysine 28. Residues glycine 101 and arginine 129 each coordinate phosphoenolpyruvate. 3-phosphoshikimate contacts are provided by serine 174, glutamine 176, aspartate 327, and lysine 354. Position 176 (glutamine 176) interacts with phosphoenolpyruvate. Catalysis depends on aspartate 327, which acts as the Proton acceptor. Residues arginine 358 and arginine 403 each coordinate phosphoenolpyruvate.

This sequence belongs to the EPSP synthase family. As to quaternary structure, monomer.

It localises to the cytoplasm. It catalyses the reaction 3-phosphoshikimate + phosphoenolpyruvate = 5-O-(1-carboxyvinyl)-3-phosphoshikimate + phosphate. Its pathway is metabolic intermediate biosynthesis; chorismate biosynthesis; chorismate from D-erythrose 4-phosphate and phosphoenolpyruvate: step 6/7. Its function is as follows. Catalyzes the transfer of the enolpyruvyl moiety of phosphoenolpyruvate (PEP) to the 5-hydroxyl of shikimate-3-phosphate (S3P) to produce enolpyruvyl shikimate-3-phosphate and inorganic phosphate. In Jannaschia sp. (strain CCS1), this protein is 3-phosphoshikimate 1-carboxyvinyltransferase.